Reading from the N-terminus, the 740-residue chain is NAD(P)H-quinone oxidoreductase subunit 5, chloroplastic (740 aa).

16 consecutive transmembrane segments (helical) span residues Trp9–Phe29, Trp40–Ile60, Ile89–Ile109, Phe125–Ile145, Ile147–Thr167, Gly185–Phe205, Val221–Ser241, Thr258–Ala278, Leu283–Leu303, Leu327–Ile347, Ala354–Ser374, Thr396–Ser416, Leu425–Tyr445, Ile547–Pro567, Phe606–Tyr626, and Ile718–Ile738.

This sequence belongs to the complex I subunit 5 family. As to quaternary structure, NDH is composed of at least 16 different subunits, 5 of which are encoded in the nucleus.

It is found in the plastid. The protein resides in the chloroplast thylakoid membrane. The catalysed reaction is a plastoquinone + NADH + (n+1) H(+)(in) = a plastoquinol + NAD(+) + n H(+)(out). It carries out the reaction a plastoquinone + NADPH + (n+1) H(+)(in) = a plastoquinol + NADP(+) + n H(+)(out). In terms of biological role, NDH shuttles electrons from NAD(P)H:plastoquinone, via FMN and iron-sulfur (Fe-S) centers, to quinones in the photosynthetic chain and possibly in a chloroplast respiratory chain. The immediate electron acceptor for the enzyme in this species is believed to be plastoquinone. Couples the redox reaction to proton translocation, and thus conserves the redox energy in a proton gradient. The sequence is that of NAD(P)H-quinone oxidoreductase subunit 5, chloroplastic (ndhF) from Aethionema grandiflorum (Persian stone-cress).